Consider the following 385-residue polypeptide: L-arabinitol 4-dehydrogenase (385 aa).

Residues Cys54, His79, Glu80, Cys109, Cys112, Cys115, Cys123, and Glu164 each contribute to the Zn(2+) site. NAD(+)-binding positions include 191 to 192 (PI), Asp212, Arg217, Ile292, and 316 to 318 (QYR).

This sequence belongs to the zinc-containing alcohol dehydrogenase family. As to quaternary structure, homotetramer. Zn(2+) serves as cofactor.

The catalysed reaction is L-arabinitol + NAD(+) = L-xylulose + NADH + H(+). Its pathway is carbohydrate degradation; L-arabinose degradation via L-arabinitol; D-xylulose 5-phosphate from L-arabinose (fungal route): step 2/5. In terms of biological role, catalyzes the NAD-dependent oxidation of L-arabinitol to L-xylulose in the fungal L-arabinose catabolic pathway. L-arabinose catabolism is important for using plant material as a carbon source. NADP cannot act as a cosubstrate. In Penicillium rubens (strain ATCC 28089 / DSM 1075 / NRRL 1951 / Wisconsin 54-1255) (Penicillium chrysogenum), this protein is L-arabinitol 4-dehydrogenase (lad1).